Reading from the N-terminus, the 125-residue chain is Small ribosomal subunit protein uS12 (125 aa).

The residue at position 89 (Asp89) is a 3-methylthioaspartic acid.

It belongs to the universal ribosomal protein uS12 family. In terms of assembly, part of the 30S ribosomal subunit. Contacts proteins S8 and S17. May interact with IF1 in the 30S initiation complex.

Its function is as follows. With S4 and S5 plays an important role in translational accuracy. In terms of biological role, interacts with and stabilizes bases of the 16S rRNA that are involved in tRNA selection in the A site and with the mRNA backbone. Located at the interface of the 30S and 50S subunits, it traverses the body of the 30S subunit contacting proteins on the other side and probably holding the rRNA structure together. The combined cluster of proteins S8, S12 and S17 appears to hold together the shoulder and platform of the 30S subunit. The sequence is that of Small ribosomal subunit protein uS12 from Acidovorax sp. (strain JS42).